The primary structure comprises 130 residues: MAENQYYGTGRRKSSAARVFIKPGNGNIVINQRSLEQYFGRETARMVVRQPLELVDMVEKLDLYITVKGGGISGQAGAIRHGITRALMEYDESLRGELRKAGFVTRDARQVERKKVGLRKARRRPQFSKR.

The protein belongs to the universal ribosomal protein uS9 family.

This is Small ribosomal subunit protein uS9 from Pectobacterium carotovorum subsp. carotovorum (strain PC1).